Here is a 760-residue protein sequence, read N- to C-terminus: MRYNQFSYIPTSLERAAEELKELGFDLDLQKTAKANLESFLRKLFFHYPDSVYPLSHLIAKNDMDALSFFQSEQELSKEVFDLLALQVLGFIPGVDFTEADAFLDKLAFPIHFDETEIIKHIHHLLATRCKSGMTLIDDLVSQGMLTMDNDYHFFNGKSLATFDTSQLIREVVYVEAPLDTDQDGQLDLIKVNIIRPQSQKPLPTLMTPSPYHQGINEVANDKKLYRMEKELVVKKRRQITVEDRDFIPLETQPCKLPIGQNLESFSYINSYSLNDYFLARGFANIYVSGVGTAGSTGFMTSGDYAQIESFKAVIDWLNGRATAYTSHSKTHQVRADWANGLVCTTGKSYLGTMSTGLATTGVDGLAMIIAESAISSWYNYYRENGLVCSPGGYPGEDLDVLTELTYSRNLLAGDYLRHNDRYQELLNQQSQALDRQSGDYNQFWHDRNYLKNAHQIKCDVVYTHGLQDWNVKPRQVYEIVNALPSTINKHLFLHQGEHVYMHNWQSIDFRESMNALLCQKLLGLANDFSLPEMIWQDNTCPQNWQERKVFGTSTIKELDLGQELLLIDNHYGEDEFKAYGKDFRAFKAALFKGKANQALVDILLEEDLLINGEIVLQLKVKSSENKGLLSAQILDYGKKKRLGDLPIALTQSSIDNGQNFSREPLKELPFRENSYRVISKGFMNLQNRNNLSSIETIPNNKWMTVRLPLQPTIYHLEKGDTLRVILYTTDFEHTVRDNSNYALTIDLSQSQLIVPIASN.

Active-site charge relay system residues include Ser-349, Asp-469, and His-499.

This sequence belongs to the peptidase S15 family. Homodimer.

Its subcellular location is the cytoplasm. It catalyses the reaction Hydrolyzes Xaa-Pro-|- bonds to release unblocked, N-terminal dipeptides from substrates including Ala-Pro-|-p-nitroanilide and (sequentially) Tyr-Pro-|-Phe-Pro-|-Gly-Pro-|-Ile.. Functionally, removes N-terminal dipeptides sequentially from polypeptides having unsubstituted N-termini provided that the penultimate residue is proline. In Streptococcus pyogenes serotype M49 (strain NZ131), this protein is Xaa-Pro dipeptidyl-peptidase.